The chain runs to 558 residues: Dihydroxy-acid dehydratase (558 aa).

Mg(2+) is bound at residue D78. C119 lines the [2Fe-2S] cluster pocket. D120 and K121 together coordinate Mg(2+). K121 bears the N6-carboxylysine mark. C192 is a binding site for [2Fe-2S] cluster. E446 contacts Mg(2+). Residue S472 is the Proton acceptor of the active site.

It belongs to the IlvD/Edd family. In terms of assembly, homodimer. The cofactor is [2Fe-2S] cluster. Mg(2+) is required as a cofactor.

It catalyses the reaction (2R)-2,3-dihydroxy-3-methylbutanoate = 3-methyl-2-oxobutanoate + H2O. The enzyme catalyses (2R,3R)-2,3-dihydroxy-3-methylpentanoate = (S)-3-methyl-2-oxopentanoate + H2O. Its pathway is amino-acid biosynthesis; L-isoleucine biosynthesis; L-isoleucine from 2-oxobutanoate: step 3/4. It functions in the pathway amino-acid biosynthesis; L-valine biosynthesis; L-valine from pyruvate: step 3/4. Its function is as follows. Functions in the biosynthesis of branched-chain amino acids. Catalyzes the dehydration of (2R,3R)-2,3-dihydroxy-3-methylpentanoate (2,3-dihydroxy-3-methylvalerate) into 2-oxo-3-methylpentanoate (2-oxo-3-methylvalerate) and of (2R)-2,3-dihydroxy-3-methylbutanoate (2,3-dihydroxyisovalerate) into 2-oxo-3-methylbutanoate (2-oxoisovalerate), the penultimate precursor to L-isoleucine and L-valine, respectively. In Campylobacter jejuni subsp. doylei (strain ATCC BAA-1458 / RM4099 / 269.97), this protein is Dihydroxy-acid dehydratase.